The sequence spans 695 residues: Threonine--tRNA ligase (695 aa).

Residues 1–76 (MPRIPSPPQA…TTTDVVEPVT (76 aa)) form the TGS domain. Positions 279-585 (DHRKLGVELD…LLEHHAGAFP (307 aa)) are catalytic. Zn(2+) is bound by residues C384, H435, and H562.

It belongs to the class-II aminoacyl-tRNA synthetase family. As to quaternary structure, homodimer. It depends on Zn(2+) as a cofactor.

Its subcellular location is the cytoplasm. It catalyses the reaction tRNA(Thr) + L-threonine + ATP = L-threonyl-tRNA(Thr) + AMP + diphosphate + H(+). Functionally, catalyzes the attachment of threonine to tRNA(Thr) in a two-step reaction: L-threonine is first activated by ATP to form Thr-AMP and then transferred to the acceptor end of tRNA(Thr). Also edits incorrectly charged L-seryl-tRNA(Thr). The polypeptide is Threonine--tRNA ligase (Leifsonia xyli subsp. xyli (strain CTCB07)).